A 175-amino-acid chain; its full sequence is DASH complex subunit DAM1 (175 aa).

Residues 1–39 (MAPEDTNPQSSHRRTRSTSRSRPTTPLRPSSRSSFRSSA) form a disordered region. Low complexity predominate over residues 20–39 (RSRPTTPLRPSSRSSFRSSA).

It belongs to the DASH complex DAM1 family. Component of the DASH complex consisting of ASK1, DAD1, DAD2, DAD3, DAD4, DAM1, DUO1, HSK3, SPC19 and SPC34, with a stoichiometry of one copy of each subunit per complex. Multiple DASH complexes oligomerize to form a ring that encircles spindle microtubules and organizes the rod-like NDC80 complexes of the outer kinetochore. DASH complex oligomerization strengthens microtubule attachments. On cytoplasmic microtubules, DASH complexes appear to form patches instead of rings.

It localises to the chromosome. The protein localises to the centromere. Its subcellular location is the kinetochore. The protein resides in the cytoplasm. It is found in the cytoskeleton. It localises to the spindle. The protein localises to the nucleus. Its function is as follows. Component of the DASH complex that connects microtubules with kinetochores and couples microtubule depolymerisation to chromosome movement; it is involved in retrieving kinetochores to the spindle poles before their re-orientation on the spindle in early mitosis and allows microtubule depolymerization to pull chromosomes apart and resist detachment during anaphase. Kinetochores, consisting of a centromere-associated inner segment and a microtubule-contacting outer segment, play a crucial role in chromosome segregation by mediating the physical connection between centromeric DNA and microtubules. Kinetochores also serve as an input point for the spindle assembly checkpoint, which delays anaphase until all chromosomes have bioriented on the mitotic spindle. In Chaetomium thermophilum (strain DSM 1495 / CBS 144.50 / IMI 039719) (Thermochaetoides thermophila), this protein is DASH complex subunit DAM1.